The sequence spans 230 residues: Large ribosomal subunit protein uL4 (230 aa).

The disordered stretch occupies residues 51 to 105; the sequence is RAAARQGTHSTKTRGDVSGGGRKPYRQKGTGRARQGSMRAPQFTGGGIVHGPKLR.

It belongs to the universal ribosomal protein uL4 family. In terms of assembly, part of the 50S ribosomal subunit.

Its function is as follows. One of the primary rRNA binding proteins, this protein initially binds near the 5'-end of the 23S rRNA. It is important during the early stages of 50S assembly. It makes multiple contacts with different domains of the 23S rRNA in the assembled 50S subunit and ribosome. Forms part of the polypeptide exit tunnel. The protein is Large ribosomal subunit protein uL4 of Mycobacterium leprae (strain Br4923).